The primary structure comprises 1343 residues: DNA-directed RNA polymerase subunit beta (1343 aa).

This sequence belongs to the RNA polymerase beta chain family. As to quaternary structure, the RNAP catalytic core consists of 2 alpha, 1 beta, 1 beta' and 1 omega subunit. When a sigma factor is associated with the core the holoenzyme is formed, which can initiate transcription.

The catalysed reaction is RNA(n) + a ribonucleoside 5'-triphosphate = RNA(n+1) + diphosphate. Functionally, DNA-dependent RNA polymerase catalyzes the transcription of DNA into RNA using the four ribonucleoside triphosphates as substrates. The protein is DNA-directed RNA polymerase subunit beta of Shewanella woodyi (strain ATCC 51908 / MS32).